We begin with the raw amino-acid sequence, 414 residues long: Imidazolonepropionase (414 aa).

Positions 73 and 75 each coordinate Fe(3+). Zn(2+)-binding residues include H73 and H75. R82, Y145, and H178 together coordinate 4-imidazolone-5-propanoate. Residue Y145 coordinates N-formimidoyl-L-glutamate. H249 lines the Fe(3+) pocket. H249 provides a ligand contact to Zn(2+). Q252 serves as a coordination point for 4-imidazolone-5-propanoate. Residue D324 participates in Fe(3+) binding. Residue D324 participates in Zn(2+) binding. The N-formimidoyl-L-glutamate site is built by N326 and G328. S329 is a 4-imidazolone-5-propanoate binding site.

The protein belongs to the metallo-dependent hydrolases superfamily. HutI family. The cofactor is Zn(2+). Requires Fe(3+) as cofactor.

Its subcellular location is the cytoplasm. It catalyses the reaction 4-imidazolone-5-propanoate + H2O = N-formimidoyl-L-glutamate. It functions in the pathway amino-acid degradation; L-histidine degradation into L-glutamate; N-formimidoyl-L-glutamate from L-histidine: step 3/3. Its function is as follows. Catalyzes the hydrolytic cleavage of the carbon-nitrogen bond in imidazolone-5-propanoate to yield N-formimidoyl-L-glutamate. It is the third step in the universal histidine degradation pathway. This is Imidazolonepropionase from Shewanella denitrificans (strain OS217 / ATCC BAA-1090 / DSM 15013).